Here is a 1473-residue protein sequence, read N- to C-terminus: Sulfite reductase [NADPH] subunit beta (1473 aa).

In terms of domain architecture, Flavodoxin-like spans 728-876; sequence LTILFASDGG…AYNLWEPELW (149 aa). The [4Fe-4S] cluster site is built by cysteine 1328, cysteine 1334, cysteine 1373, and cysteine 1377. Cysteine 1377 is a binding site for siroheme.

Belongs to the nitrite and sulfite reductase 4Fe-4S domain family. In terms of assembly, alpha(2)-beta(2). The alpha component is a flavoprotein, the beta component is a hemoprotein. Siroheme serves as cofactor. It depends on [4Fe-4S] cluster as a cofactor.

The protein localises to the cytoplasm. The catalysed reaction is hydrogen sulfide + 3 NADP(+) + 3 H2O = sulfite + 3 NADPH + 4 H(+). The protein operates within sulfur metabolism; hydrogen sulfide biosynthesis; hydrogen sulfide from sulfite (NADPH route): step 1/1. Catalyzes the reduction of sulfite to sulfide, one of several activities required for the biosynthesis of L-cysteine from sulfate. This Schizosaccharomyces pombe (strain 972 / ATCC 24843) (Fission yeast) protein is Sulfite reductase [NADPH] subunit beta (sir1).